A 1074-amino-acid chain; its full sequence is DNA helicase B (1074 aa).

3 disordered regions span residues 1–38 (MARQ…EEEF), 380–420 (GAKP…HVRS), and 932–1014 (GSCA…FDEE). A compositionally biased stretch (acidic residues) spans 20–38 (DDEEEDCAQEEEGEQEEEF). Residues 934-946 (CAPSTGFASQPSS) are compositionally biased toward polar residues. Ser-942 and Ser-946 each carry phosphoserine. Thr-992 is modified (phosphothreonine). Phosphoserine occurs at positions 1015 and 1026. Residues 1022 to 1046 (VEAPSPQVSSVFQNMRLNTLTPRQL) carry the Nuclear export signal motif. Residues 1040-1074 (TLTPRQLFKPTDNQDTGTAGVADDANDPSNQEMEM) are disordered.

The protein belongs to the RecD family. HELB subfamily. Binds to RPA1; this interaction promotes HELB recruitment to chromatin following DNA damage. Interacts with at least two subunits of the DNA polymerase alpha complex. Interacts with CDC45. Interacts with TOPB1. In terms of processing, phosphorylated at Ser-942 by CDK2 during the G1/S transition, resulting in its nuclear export into the cytoplasm. As S phase progresses, its exclusion from the nucleus promotes the activation of long-range resection.

The protein resides in the nucleus. It localises to the cytoplasm. The protein localises to the chromosome. It carries out the reaction ATP + H2O = ADP + phosphate + H(+). In terms of biological role, 5'-3' DNA helicase involved in DNA damage response by acting as an inhibitor of DNA end resection. Recruitment to single-stranded DNA (ssDNA) following DNA damage leads to inhibit the nucleases catalyzing resection, such as EXO1, BLM and DNA2, possibly via the 5'-3' ssDNA translocase activity of HELB. As cells approach S phase, DNA end resection is promoted by the nuclear export of HELB following phosphorylation. Acts independently of TP53BP1. Unwinds duplex DNA with 5'-3' polarity. Has single-strand DNA-dependent ATPase and DNA helicase activities. Prefers ATP and dATP as substrates. During S phase, may facilitate cellular recovery from replication stress. This Mus musculus (Mouse) protein is DNA helicase B.